The following is a 100-amino-acid chain: NADH-quinone oxidoreductase subunit K (100 aa).

Transmembrane regions (helical) follow at residues 3–23 (LNAY…GIFL), 29–49 (ISIM…FVAF), and 60–80 (IFTF…LAIL).

Belongs to the complex I subunit 4L family. In terms of assembly, NDH-1 is composed of 14 different subunits. Subunits NuoA, H, J, K, L, M, N constitute the membrane sector of the complex.

It localises to the cell inner membrane. It catalyses the reaction a quinone + NADH + 5 H(+)(in) = a quinol + NAD(+) + 4 H(+)(out). Its function is as follows. NDH-1 shuttles electrons from NADH, via FMN and iron-sulfur (Fe-S) centers, to quinones in the respiratory chain. The immediate electron acceptor for the enzyme in this species is believed to be ubiquinone. Couples the redox reaction to proton translocation (for every two electrons transferred, four hydrogen ions are translocated across the cytoplasmic membrane), and thus conserves the redox energy in a proton gradient. This is NADH-quinone oxidoreductase subunit K from Magnetococcus marinus (strain ATCC BAA-1437 / JCM 17883 / MC-1).